The following is a 218-amino-acid chain: Small ribosomal subunit protein uS3c (218 aa).

Residues valine 47–glutamate 118 form the KH type-2 domain.

This sequence belongs to the universal ribosomal protein uS3 family. As to quaternary structure, part of the 30S ribosomal subunit.

It localises to the plastid. It is found in the chloroplast. The chain is Small ribosomal subunit protein uS3c (rps3) from Anthoceros angustus (Hornwort).